The sequence spans 123 residues: MSPTGFFLLTVLLVLVTEAASRGPREKFSQSAEDPYSENMNLKILASGRGSSSTFGAFSRSENSRSNFKSKSPSSITREKVNEESRSEMSSTSSHFGLKMRRSHGGGEMNPFETKVKTRITRK.

The first 21 residues, 1–21 (MSPTGFFLLTVLLVLVTEAAS), serve as a signal peptide directing secretion. The tract at residues 50–123 (GSSSTFGAFS…TKVKTRITRK (74 aa)) is disordered. The span at 64-75 (SRSNFKSKSPSS) shows a compositional bias: low complexity. The segment covering 77–87 (TREKVNEESRS) has biased composition (basic and acidic residues).

Belongs to the SVP2/SVP5/SVP6 family. As to expression, testis.

The protein localises to the secreted. Its subcellular location is the extracellular space. The chain is Seminal vesicle secretory protein 5 (Svs5) from Rattus norvegicus (Rat).